Consider the following 589-residue polypeptide: Kelch-like protein 25 (589 aa).

The BTB domain occupies 46 to 114 (TDMTLWAGNR…AYSSKIIINE (69 aa)). One can recognise a BACK domain in the interval 149 to 250 (CLGMMILSDA…LPSELLKEAV (102 aa)). Kelch repeat units follow at residues 296-340 (TLLI…AIGC), 341-388 (KVYI…ELDN), 389-444 (CLYV…SAKL), 446-492 (LFVF…VLGS), 494-538 (IFIM…ASGN), and 539-585 (KVYV…STWK).

In terms of assembly, component of the BCR(KLHL25) E3 ubiquitin ligase complex, at least composed of cul3, klhl25 and rbx1.

It participates in protein modification; protein ubiquitination. Functionally, substrate-specific adapter of a BCR (BTB-CUL3-RBX1) E3 ubiquitin ligase complex involved in various processes, such as translation homeostasis and lipid synthesis. The BCR(KLHL25) ubiquitin ligase complex acts by mediating ubiquitination of hypophosphorylated eif4ebp1 (4E-BP1): ubiquitination and subsequent degradation of hypophosphorylated EIF4EBP1 (4E-BP1) probably serves as a homeostatic mechanism to maintain translation and prevent eIF4E inhibition when eIF4E levels are low. The BCR(KLHL25) complex also acts as a regulator of lipid synthesis by mediating ubiquitination and degradation of ACLY, thereby inhibiting lipid synthesis. The protein is Kelch-like protein 25 of Xenopus laevis (African clawed frog).